Reading from the N-terminus, the 253-residue chain is MHIDVIGHGPALVLLHGWALHGGVFAPLVERLAPHYQLHLVDLPGHGFSHDDTTPLALPHVVAAIAAATPAAVWVGWSLGGLFALHAAATQPQVRALAMIAATPRFVRGSDWPDAVEREVFVQFGQDLARDYRGTLDRFLALDTLGSAHARSELRSLRETLTARGEPAASALQDGLGLLERTDLRRALATLARPSLWIAGQRDRLVPAAGMHAAAARAPHAQALTIDGGGHAPFLGHADQVAEALHRFVAALP.

Substrate is bound by residues tryptophan 18, 78–79 (SL), and 139–143 (FLALD). The active-site Nucleophile is the serine 78. Residues aspartate 203 and histidine 231 contribute to the active site. Histidine 231 lines the substrate pocket.

The protein belongs to the AB hydrolase superfamily. Carboxylesterase BioH family. In terms of assembly, monomer.

It is found in the cytoplasm. The enzyme catalyses 6-carboxyhexanoyl-[ACP] methyl ester + H2O = 6-carboxyhexanoyl-[ACP] + methanol + H(+). It participates in cofactor biosynthesis; biotin biosynthesis. Functionally, the physiological role of BioH is to remove the methyl group introduced by BioC when the pimeloyl moiety is complete. It allows to synthesize pimeloyl-ACP via the fatty acid synthetic pathway through the hydrolysis of the ester bonds of pimeloyl-ACP esters. The polypeptide is Pimeloyl-[acyl-carrier protein] methyl ester esterase (Xanthomonas campestris pv. campestris (strain 8004)).